We begin with the raw amino-acid sequence, 401 residues long: UDP-N-acetylglucosamine--N-acetylmuramyl-(pentapeptide) pyrophosphoryl-undecaprenol N-acetylglucosamine transferase (401 aa).

The tract at residues 1 to 24 (MTRISVPAGQERNDGGISVPAGQE) is disordered. UDP-N-acetyl-alpha-D-glucosamine is bound by residues 39 to 41 (TAG), Asn-157, Arg-194, Ser-228, and Gln-324.

Belongs to the glycosyltransferase 28 family. MurG subfamily.

It is found in the cell membrane. The catalysed reaction is di-trans,octa-cis-undecaprenyl diphospho-N-acetyl-alpha-D-muramoyl-L-alanyl-D-glutamyl-meso-2,6-diaminopimeloyl-D-alanyl-D-alanine + UDP-N-acetyl-alpha-D-glucosamine = di-trans,octa-cis-undecaprenyl diphospho-[N-acetyl-alpha-D-glucosaminyl-(1-&gt;4)]-N-acetyl-alpha-D-muramoyl-L-alanyl-D-glutamyl-meso-2,6-diaminopimeloyl-D-alanyl-D-alanine + UDP + H(+). The protein operates within cell wall biogenesis; peptidoglycan biosynthesis. In terms of biological role, cell wall formation. Catalyzes the transfer of a GlcNAc subunit on undecaprenyl-pyrophosphoryl-MurNAc-pentapeptide (lipid intermediate I) to form undecaprenyl-pyrophosphoryl-MurNAc-(pentapeptide)GlcNAc (lipid intermediate II). This is UDP-N-acetylglucosamine--N-acetylmuramyl-(pentapeptide) pyrophosphoryl-undecaprenol N-acetylglucosamine transferase from Mycolicibacterium vanbaalenii (strain DSM 7251 / JCM 13017 / BCRC 16820 / KCTC 9966 / NRRL B-24157 / PYR-1) (Mycobacterium vanbaalenii).